We begin with the raw amino-acid sequence, 107 residues long: EPIDERMAL PATTERNING FACTOR-like protein 5 (107 aa).

An N-terminal signal peptide occupies residues 1 to 22 (MGVVLPTLIVYAFLLFFSSSSA). 3 disulfide bridges follow: C64/C98, C68/C74, and C71/C100.

This sequence belongs to the plant cysteine rich small secretory peptide family. Epidermal patterning factor subfamily. In terms of assembly, interacts with ERECTA. As to expression, expressed asymetically in the hypocotyl, on the side proximal to the folded cotyledons at germination. Detected in developing flowers, the chalazal region of ovules and near the root apex, but not in inflorescence stems. Expressed in cotyledons, flowers, adult leaves and fruits.

The protein localises to the secreted. Controls stomatal patterning. Mediates differentiation of stomatal lineage cells to pavement cells and stomatal development inhibition. TMM (AC Q9SSD1) functions to dampen or block CLL1 signaling. Acts as a growth-regulatory ligand for ERECTA family receptors. Promotes fruit growth and fertility. The polypeptide is EPIDERMAL PATTERNING FACTOR-like protein 5 (Arabidopsis thaliana (Mouse-ear cress)).